Consider the following 110-residue polypeptide: Large ribosomal subunit protein eL30 (110 aa).

The protein belongs to the eukaryotic ribosomal protein eL30 family.

The protein is Large ribosomal subunit protein eL30 (rpl30e) of Methanocaldococcus jannaschii (strain ATCC 43067 / DSM 2661 / JAL-1 / JCM 10045 / NBRC 100440) (Methanococcus jannaschii).